The primary structure comprises 277 residues: 3-methyl-2-oxobutanoate hydroxymethyltransferase (277 aa).

2 residues coordinate Mg(2+): aspartate 53 and aspartate 96. 3-methyl-2-oxobutanoate is bound by residues aspartate 53–serine 54, aspartate 96, and lysine 126. Position 128 (glutamate 128) interacts with Mg(2+). Glutamate 195 functions as the Proton acceptor in the catalytic mechanism.

It belongs to the PanB family. As to quaternary structure, homodecamer; pentamer of dimers. Requires Mg(2+) as cofactor.

The protein resides in the cytoplasm. The enzyme catalyses 3-methyl-2-oxobutanoate + (6R)-5,10-methylene-5,6,7,8-tetrahydrofolate + H2O = 2-dehydropantoate + (6S)-5,6,7,8-tetrahydrofolate. It participates in cofactor biosynthesis; (R)-pantothenate biosynthesis; (R)-pantoate from 3-methyl-2-oxobutanoate: step 1/2. Functionally, catalyzes the reversible reaction in which hydroxymethyl group from 5,10-methylenetetrahydrofolate is transferred onto alpha-ketoisovalerate to form ketopantoate. This Chlorobaculum parvum (strain DSM 263 / NCIMB 8327) (Chlorobium vibrioforme subsp. thiosulfatophilum) protein is 3-methyl-2-oxobutanoate hydroxymethyltransferase.